Here is a 786-residue protein sequence, read N- to C-terminus: Polyribonucleotide nucleotidyltransferase (786 aa).

Mg(2+) contacts are provided by Asp516 and Asp522. A KH domain is found at 582–641; that stretch reads PRVTTVKIPVDKIGMVIGPKGQTINAIQDETGAEISIEDDGTIYVGATNGPSAQAAVERV. The S1 motif domain occupies 653–722; it reads GDRFLGTVVK…QRGKIYLDKV (70 aa). The tract at residues 722 to 786 is disordered; sequence VRPEGAEGPA…SRPRRRTRHS (65 aa). Positions 727-738 are enriched in low complexity; the sequence is AEGPAEAAATDR. A compositionally biased stretch (basic and acidic residues) spans 739-778; the sequence is PAGRDRGDRAPRDRGDRGDRERGSRGPDRGDGGEGGGESR.

Belongs to the polyribonucleotide nucleotidyltransferase family. Mg(2+) is required as a cofactor.

It is found in the cytoplasm. The catalysed reaction is RNA(n+1) + phosphate = RNA(n) + a ribonucleoside 5'-diphosphate. Involved in mRNA degradation. Catalyzes the phosphorolysis of single-stranded polyribonucleotides processively in the 3'- to 5'-direction. The chain is Polyribonucleotide nucleotidyltransferase from Salinispora arenicola (strain CNS-205).